The primary structure comprises 463 residues: uncharacterized protein (463 aa).

This is an uncharacterized protein from Saccharomyces cerevisiae (strain ATCC 204508 / S288c) (Baker's yeast).